The sequence spans 365 residues: MNLAAMDPTTYDAQLTAKRIKLEQAFAQFETPSVEVFASEPAHYRMRAEFRVWHEGDDLYYYMFDKVLNDKVRCDQYLPASALINQMMAALITELKPNHSLRHKLFQVDFLSTLSGEILVSLLYHRQLDDQWRSEAAALKARLSSQFKVNIIGRARKQKIDLDKDFVVESLQVNDKVFHYKQIENSFTQPNAKVAIKMLEWAIDVTQNSQGDLLELYCGNGNFSIALAQNFNRVLATELAKPSVDAAQYNIEVNNIDNLQIIRMSAEEFSDAMAKKRSFRRLEGIDLDSYVCNTIFVDPPRAGIDPATLELVRGYERILYISCNPDTLKDNLQQLNQTHKVTRFALFDQFPYTDHMETGVLLERR.

S-adenosyl-L-methionine-binding residues include glutamine 189, tyrosine 217, asparagine 222, glutamate 238, and aspartate 298. Residue cysteine 323 is the Nucleophile of the active site. Glutamate 357 acts as the Proton acceptor in catalysis.

The protein belongs to the class I-like SAM-binding methyltransferase superfamily. RNA M5U methyltransferase family. TrmA subfamily.

The enzyme catalyses uridine(54) in tRNA + S-adenosyl-L-methionine = 5-methyluridine(54) in tRNA + S-adenosyl-L-homocysteine + H(+). It catalyses the reaction uridine(341) in tmRNA + S-adenosyl-L-methionine = 5-methyluridine(341) in tmRNA + S-adenosyl-L-homocysteine + H(+). Its function is as follows. Dual-specificity methyltransferase that catalyzes the formation of 5-methyluridine at position 54 (m5U54) in all tRNAs, and that of position 341 (m5U341) in tmRNA (transfer-mRNA). This Shewanella sp. (strain ANA-3) protein is tRNA/tmRNA (uracil-C(5))-methyltransferase.